Consider the following 202-residue polypeptide: Protein U22 (202 aa).

Helical transmembrane passes span 5–25 (GWSLAWVSVLYVSVIPSLHII) and 172–192 (FVYYCISVYLFAVAVFCSCWF).

The protein localises to the host membrane. In Human herpesvirus 6B (strain Z29) (HHV-6 variant B), this protein is Protein U22 (U22).